Here is a 369-residue protein sequence, read N- to C-terminus: 2-aminoethylphosphonate--pyruvate transaminase (369 aa).

Lys-193 is modified (N6-(pyridoxal phosphate)lysine).

It belongs to the class-V pyridoxal-phosphate-dependent aminotransferase family. PhnW subfamily. Homodimer. Pyridoxal 5'-phosphate serves as cofactor.

The enzyme catalyses (2-aminoethyl)phosphonate + pyruvate = phosphonoacetaldehyde + L-alanine. Its function is as follows. Involved in phosphonate degradation. The sequence is that of 2-aminoethylphosphonate--pyruvate transaminase from Pseudomonas fluorescens (strain ATCC BAA-477 / NRRL B-23932 / Pf-5).